The primary structure comprises 108 residues: Ribulose bisphosphate carboxylase small subunit (108 aa).

It belongs to the RuBisCO small chain family. As to quaternary structure, heterohexadecamer of 8 large and 8 small subunits.

Its function is as follows. RuBisCO catalyzes two reactions: the carboxylation of D-ribulose 1,5-bisphosphate, the primary event in carbon dioxide fixation, as well as the oxidative fragmentation of the pentose substrate. Both reactions occur simultaneously and in competition at the same active site. Although the small subunit is not catalytic it is essential for maximal activity. The sequence is that of Ribulose bisphosphate carboxylase small subunit from Nitrobacter vulgaris.